A 1188-amino-acid chain; its full sequence is AT-rich interactive domain-containing protein 5B (1188 aa).

K130 is covalently cross-linked (Glycyl lysine isopeptide (Lys-Gly) (interchain with G-Cter in SUMO2)). A disordered region spans residues 251 to 277; that stretch reads RPRKKKPCPQRRDSFSGVKDSNNNSDG. S264 carries the phosphoserine modification. Residues 318–410 enclose the ARID domain; the sequence is RADEQAFLVA…LILPYERFIK (93 aa). K336 carries the post-translational modification N6,N6-dimethyllysine. The disordered stretch occupies residues 412 to 611; that stretch reads EEDKPLPPIK…QPPLANQNET (200 aa). Residue K445 forms a Glycyl lysine isopeptide (Lys-Gly) (interchain with G-Cter in SUMO2) linkage. Residues 446–458 show a composition bias toward basic and acidic residues; that stretch reads HEIPKSKKEKENA. Residues K494 and K496 each participate in a glycyl lysine isopeptide (Lys-Gly) (interchain with G-Cter in SUMO2) cross-link. Positions 597–609 are enriched in polar residues; it reads SFPTTQPPLANQN. Glycyl lysine isopeptide (Lys-Gly) (interchain with G-Cter in SUMO2) cross-links involve residues K767, K774, K803, and K810. Disordered regions lie at residues 846–874 and 891–918; these read HHLH…PSHR and DKKS…HKPT. Residues 847–866 show a composition bias toward basic and acidic residues; that stretch reads HLHNEQTSKYPSRDMYRESE. Residues K893, K916, K920, and K935 each participate in a glycyl lysine isopeptide (Lys-Gly) (interchain with G-Cter in SUMO2) cross-link. The disordered stretch occupies residues 956 to 978; it reads RVSPMTMSGPKKYPESLSRSGKP. Residues K988, K1000, and K1013 each participate in a glycyl lysine isopeptide (Lys-Gly) (interchain with G-Cter in SUMO2) cross-link. The segment at 1028–1070 is disordered; sequence ARAVSPLDPSKEVSGKEKASEQESEGSKAAHGGHSGGGSEGHK. S1032 carries the phosphoserine modification. A compositionally biased stretch (basic and acidic residues) spans 1036-1055; sequence PSKEVSGKEKASEQESEGSK. Glycyl lysine isopeptide (Lys-Gly) (interchain with G-Cter in SUMO2) cross-links involve residues K1055 and K1070. Phosphoserine is present on S1133.

Belongs to the ARID5B family. In terms of processing, methylation at Lys-336 prevents DNA-binding. Demethylation by PHF2 promotes recruitment of the PHF2-ARID5B complex to promoters. Widely expressed, including in liver (at protein level).

The protein localises to the nucleus. Transcription coactivator that binds to the 5'-AATA[CT]-3' core sequence and plays a key role in adipogenesis and liver development. Acts by forming a complex with phosphorylated PHF2, which mediates demethylation at Lys-336, leading to target the PHF2-ARID5B complex to target promoters, where PHF2 mediates demethylation of dimethylated 'Lys-9' of histone H3 (H3K9me2), followed by transcription activation of target genes. The PHF2-ARID5B complex acts as a coactivator of HNF4A in liver. Required for adipogenesis: regulates triglyceride metabolism in adipocytes by regulating expression of adipogenic genes. Overexpression leads to induction of smooth muscle marker genes, suggesting that it may also act as a regulator of smooth muscle cell differentiation and proliferation. Represses the cytomegalovirus enhancer. This is AT-rich interactive domain-containing protein 5B (ARID5B) from Homo sapiens (Human).